The sequence spans 176 residues: uncharacterized protein (176 aa).

Residues 15 to 28 (TSSNPPASASQSTG) are compositionally biased toward polar residues. 2 disordered regions span residues 15–100 (TSSN…TSAG) and 125–176 (ASLR…NLGA). Positions 43-52 (FIDKVTDKPS) are enriched in basic and acidic residues.

This is an uncharacterized protein from Homo sapiens (Human).